A 258-amino-acid chain; its full sequence is UPF0246 protein HI_0984 (258 aa).

Belongs to the UPF0246 family.

In Haemophilus influenzae (strain ATCC 51907 / DSM 11121 / KW20 / Rd), this protein is UPF0246 protein HI_0984.